The following is a 144-amino-acid chain: Large ribosomal subunit protein uL15 (144 aa).

The tract at residues 1-53 is disordered; that stretch reads MYLNTLAPAEGAKHSAKRLGRGIGSGLGKTGGRGHKGQKSRTGGGVRRGFEGG. The span at 21–31 shows a compositional bias: gly residues; that stretch reads RGIGSGLGKTG.

The protein belongs to the universal ribosomal protein uL15 family. As to quaternary structure, part of the 50S ribosomal subunit.

Binds to the 23S rRNA. The polypeptide is Large ribosomal subunit protein uL15 (Mannheimia succiniciproducens (strain KCTC 0769BP / MBEL55E)).